Here is a 245-residue protein sequence, read N- to C-terminus: Phosphoribosylaminoimidazole-succinocarboxamide synthase (245 aa).

It belongs to the SAICAR synthetase family.

It carries out the reaction 5-amino-1-(5-phospho-D-ribosyl)imidazole-4-carboxylate + L-aspartate + ATP = (2S)-2-[5-amino-1-(5-phospho-beta-D-ribosyl)imidazole-4-carboxamido]succinate + ADP + phosphate + 2 H(+). It functions in the pathway purine metabolism; IMP biosynthesis via de novo pathway; 5-amino-1-(5-phospho-D-ribosyl)imidazole-4-carboxamide from 5-amino-1-(5-phospho-D-ribosyl)imidazole-4-carboxylate: step 1/2. The sequence is that of Phosphoribosylaminoimidazole-succinocarboxamide synthase from Nostoc sp. (strain PCC 7120 / SAG 25.82 / UTEX 2576).